A 589-amino-acid chain; its full sequence is Probable cytochrome P450 49a1 (589 aa).

The interval 56-90 is disordered; it reads TGESSNPKKLNVSQQPVTSVATTRTTASSLPAETT. A compositionally biased stretch (polar residues) spans 57–71; the sequence is GESSNPKKLNVSQQP. Positions 72-84 are enriched in low complexity; that stretch reads VTSVATTRTTASS. Cys536 lines the heme pocket.

This sequence belongs to the cytochrome P450 family. Heme is required as a cofactor.

It localises to the endoplasmic reticulum membrane. The protein localises to the microsome membrane. May be involved in the metabolism of insect hormones and in the breakdown of synthetic insecticides. This chain is Probable cytochrome P450 49a1 (Cyp49a1), found in Drosophila melanogaster (Fruit fly).